The primary structure comprises 253 residues: 5'-nucleotidase SurE (253 aa).

Positions 8, 9, 40, and 93 each coordinate a divalent metal cation.

Belongs to the SurE nucleotidase family. A divalent metal cation serves as cofactor.

It localises to the cytoplasm. The catalysed reaction is a ribonucleoside 5'-phosphate + H2O = a ribonucleoside + phosphate. Nucleotidase that shows phosphatase activity on nucleoside 5'-monophosphates. In Methylobacterium nodulans (strain LMG 21967 / CNCM I-2342 / ORS 2060), this protein is 5'-nucleotidase SurE.